Consider the following 224-residue polypeptide: Uridylate kinase (224 aa).

9–10 serves as a coordination point for ATP; it reads GS. Gly43 is a binding site for UMP. Positions 44 and 48 each coordinate ATP. Residues Asp65 and 113 to 119 each bind UMP; that span reads VVPGQTT. Residues Thr139, Phe145, and Asp148 each contribute to the ATP site.

Belongs to the UMP kinase family. Homohexamer.

The protein resides in the cytoplasm. It carries out the reaction UMP + ATP = UDP + ADP. It functions in the pathway pyrimidine metabolism; CTP biosynthesis via de novo pathway; UDP from UMP (UMPK route): step 1/1. Inhibited by UTP. In terms of biological role, catalyzes the reversible phosphorylation of UMP to UDP. This Methanocella arvoryzae (strain DSM 22066 / NBRC 105507 / MRE50) protein is Uridylate kinase.